The primary structure comprises 282 residues: Putative hydrolase Bcep18194_B0137 (282 aa).

Mg(2+) is bound by residues Glu124, Glu126, and Asp155.

This sequence belongs to the FAH family. The cofactor is Mg(2+).

In Burkholderia lata (strain ATCC 17760 / DSM 23089 / LMG 22485 / NCIMB 9086 / R18194 / 383), this protein is Putative hydrolase Bcep18194_B0137.